Here is a 255-residue protein sequence, read N- to C-terminus: MRILCTNDDGIHAPGLKVIEEIARALSDDVWIVAPELDQSGVSHSLSLNDPLRLREVGPRHFAVRGTPTDCVIMGARHILGAKLPDLVLSGVNKGRNVAEDVVYSGTIAGALEGTILGLPSFALSQEFSIATRDKPSWDTALKFGPQIVRKVLEAGVPRNTVINVNFPACAPDEVKGLVVTRQGKRNLGFLKVDERRDGRGNPYFWIGFDRAAALDVPDEGTDLAALAARYVSVTPLRLDRTDEAFSGKLTTILG.

Residues aspartate 8, aspartate 9, serine 40, and asparagine 93 each coordinate a divalent metal cation.

The protein belongs to the SurE nucleotidase family. The cofactor is a divalent metal cation.

The protein localises to the cytoplasm. The enzyme catalyses a ribonucleoside 5'-phosphate + H2O = a ribonucleoside + phosphate. Its function is as follows. Nucleotidase that shows phosphatase activity on nucleoside 5'-monophosphates. The sequence is that of 5'-nucleotidase SurE from Bradyrhizobium sp. (strain BTAi1 / ATCC BAA-1182).